The sequence spans 94 residues: Large ribosomal subunit protein eL36 (94 aa).

Over residues 1-25 (MKNAYKKVRVRYPVKRPDVKRKQRG) the composition is skewed to basic residues. Residues 1–30 (MKNAYKKVRVRYPVKRPDVKRKQRGPRAET) are disordered.

This sequence belongs to the eukaryotic ribosomal protein eL36 family. Component of the large ribosomal subunit.

It is found in the cytoplasm. The polypeptide is Large ribosomal subunit protein eL36 (RPL36) (Encephalitozoon cuniculi (strain GB-M1) (Microsporidian parasite)).